Here is a 347-residue protein sequence, read N- to C-terminus: Homocysteine S-methyltransferase 3 (347 aa).

Residues Leu-12–Leu-333 enclose the Hcy-binding domain. 3 residues coordinate Zn(2+): Cys-251, Cys-318, and Cys-319.

Monomer. Requires Zn(2+) as cofactor. Expressed predominantly in rosette leaves. Expressed in roots, cauline leaves and developing seeds.

It carries out the reaction S-methyl-L-methionine + L-homocysteine = 2 L-methionine + H(+). Its function is as follows. Catalyzes methyl transfer from S-methylmethionine (SMM) to adenosyl-L-homocysteine (AdoMet). SMM degradation (by HMT-1, HMT-2 and HMT-3) and biosynthesis (by MMT1) constitute the SMM cycle in plants, which is probably required to achieve short term control of AdoMet level. The sequence is that of Homocysteine S-methyltransferase 3 (HMT3) from Arabidopsis thaliana (Mouse-ear cress).